The following is a 141-amino-acid chain: Hemoglobin D subunit alpha (141 aa).

The 141-residue stretch at 1–141 folds into the Globin domain; it reads MLTEDDKQLI…VSAVLAEKYR (141 aa). Position 58 (H58) interacts with O2. Residue H87 participates in heme b binding.

This sequence belongs to the globin family. Tetramer of two alpha chains and two beta chains. In terms of tissue distribution, red blood cells.

In terms of biological role, involved in oxygen transport from the lung to the various peripheral tissues. This chain is Hemoglobin D subunit alpha, found in Aldabrachelys gigantea (Aldabra giant tortoise).